A 493-amino-acid chain; its full sequence is MKAKSLMVVGTTSHAGKSLLAAVICRWLAQQGYRVTPFKGQNMALNAYVTREGGEIGYAQAMQAWAAGIEPEVAMNPILLKPQGNMTSQVILRGQVVGVTRAADYYRDYFERGWQAITEALADLQQRFDWIVCEGAGSPAEINLKHRDLTNMRVATYLGAPTILVADIDRGGVFAHIVGTLMLLEPAERALIQGIVINKFRGQRSLLDSGLQWLEETTGVPVLGVIPWLERHYAAEDSLDLWDPRPQRQGADLKITVIRLPRIANFTDIDPLLAEPSVAVEFLPPHRPLGRPDAVILPGTKTTIADLQVLRETGMAEQLKTYAAQGGTILGICGGWQMLGTAISDPLGLEGCPGTYEGLGLMPLHTQLGPTKCTQQQQTQSLYFNCPEPILGYEIHQGQSEYTGDRQGWHPLFAAPELGLVNRAGTLWGTYLHGLLENGPWRRHWLNGLRSRRQLPPLPTAIPHYGEQRTVALDELTKTVMAHLNLRGICKLC.

One can recognise a GATase cobBQ-type domain in the interval 252 to 441 (DLKITVIRLP…LHGLLENGPW (190 aa)). Cys-333 functions as the Nucleophile in the catalytic mechanism. His-433 is a catalytic residue.

The protein belongs to the CobB/CobQ family. CobQ subfamily.

It participates in cofactor biosynthesis; adenosylcobalamin biosynthesis. Its function is as follows. Catalyzes amidations at positions B, D, E, and G on adenosylcobyrinic A,C-diamide. NH(2) groups are provided by glutamine, and one molecule of ATP is hydrogenolyzed for each amidation. The chain is Cobyric acid synthase from Thermosynechococcus vestitus (strain NIES-2133 / IAM M-273 / BP-1).